Here is a 201-residue protein sequence, read N- to C-terminus: Outer-membrane lipoprotein LolB (201 aa).

Residues 1-18 (MKWCRLSIILMSLILLAG) form the signal peptide. The N-palmitoyl cysteine moiety is linked to residue C19. C19 carries S-diacylglycerol cysteine lipidation.

It belongs to the LolB family. Monomer.

It localises to the cell outer membrane. Its function is as follows. Plays a critical role in the incorporation of lipoproteins in the outer membrane after they are released by the LolA protein. This Nitrosococcus oceani (strain ATCC 19707 / BCRC 17464 / JCM 30415 / NCIMB 11848 / C-107) protein is Outer-membrane lipoprotein LolB.